Here is a 214-residue protein sequence, read N- to C-terminus: Holliday junction branch migration complex subunit RuvA (214 aa).

Positions 1 to 63 (MISFLRGTVA…EDSLTLFGFS (63 aa)) are domain I. A domain II region spans residues 64–142 (SDDEREVFDV…PHGTGAAAAP (79 aa)). The interval 143-153 (AAAASAPWKPQ) is flexible linker. Residues 153–214 (QVVAAMTSLG…RAGNRVGSRG (62 aa)) form a domain III region.

The protein belongs to the RuvA family. As to quaternary structure, homotetramer. Forms an RuvA(8)-RuvB(12)-Holliday junction (HJ) complex. HJ DNA is sandwiched between 2 RuvA tetramers; dsDNA enters through RuvA and exits via RuvB. An RuvB hexamer assembles on each DNA strand where it exits the tetramer. Each RuvB hexamer is contacted by two RuvA subunits (via domain III) on 2 adjacent RuvB subunits; this complex drives branch migration. In the full resolvosome a probable DNA-RuvA(4)-RuvB(12)-RuvC(2) complex forms which resolves the HJ.

The protein localises to the cytoplasm. Its function is as follows. The RuvA-RuvB-RuvC complex processes Holliday junction (HJ) DNA during genetic recombination and DNA repair, while the RuvA-RuvB complex plays an important role in the rescue of blocked DNA replication forks via replication fork reversal (RFR). RuvA specifically binds to HJ cruciform DNA, conferring on it an open structure. The RuvB hexamer acts as an ATP-dependent pump, pulling dsDNA into and through the RuvAB complex. HJ branch migration allows RuvC to scan DNA until it finds its consensus sequence, where it cleaves and resolves the cruciform DNA. In Arthrobacter sp. (strain FB24), this protein is Holliday junction branch migration complex subunit RuvA.